A 197-amino-acid polypeptide reads, in one-letter code: MNYSKAKYIMGAAKVSQLPEDTGVEVAFAGRSNAGKSSALNTLTDQKGLARVSKTPGRTQLINLFDLGNNNRLVDLPGYGYAKVSESIKRQWQSEMENYLTSRKCLNGIVLLVDSRHELKEFDSLMIEMAISFDLNLHILLTKADKLNNKERAQANRMIESFLKTFVSTDKISYQLFSSLTKMGLDKFKEKLDTWYQ.

The EngB-type G domain occupies 22-197 (TGVEVAFAGR…FKEKLDTWYQ (176 aa)). Residues 30–37 (GRSNAGKS), 57–61 (GRTQL), 75–78 (DLPG), 142–145 (TKAD), and 177–179 (FSS) contribute to the GTP site. Mg(2+) contacts are provided by Ser37 and Thr59.

It belongs to the TRAFAC class TrmE-Era-EngA-EngB-Septin-like GTPase superfamily. EngB GTPase family. Requires Mg(2+) as cofactor.

Functionally, necessary for normal cell division and for the maintenance of normal septation. The sequence is that of Probable GTP-binding protein EngB from Francisella tularensis subsp. holarctica (strain FTNF002-00 / FTA).